Here is an 88-residue protein sequence, read N- to C-terminus: Small ribosomal subunit protein uS15 (88 aa).

It belongs to the universal ribosomal protein uS15 family. In terms of assembly, part of the 30S ribosomal subunit. Forms a bridge to the 50S subunit in the 70S ribosome, contacting the 23S rRNA.

Its function is as follows. One of the primary rRNA binding proteins, it binds directly to 16S rRNA where it helps nucleate assembly of the platform of the 30S subunit by binding and bridging several RNA helices of the 16S rRNA. Functionally, forms an intersubunit bridge (bridge B4) with the 23S rRNA of the 50S subunit in the ribosome. This is Small ribosomal subunit protein uS15 from Borrelia turicatae (strain 91E135).